The chain runs to 347 residues: Protein RecA (347 aa).

Position 67–74 (67–74 (GPESSGKT)) interacts with ATP.

Belongs to the RecA family.

It localises to the cytoplasm. Its function is as follows. Can catalyze the hydrolysis of ATP in the presence of single-stranded DNA, the ATP-dependent uptake of single-stranded DNA by duplex DNA, and the ATP-dependent hybridization of homologous single-stranded DNAs. It interacts with LexA causing its activation and leading to its autocatalytic cleavage. In Helicobacter pylori (strain Shi470), this protein is Protein RecA.